The primary structure comprises 298 residues: Developmental pluripotency-associated protein 2 (298 aa).

Residues 36–61 (NMEQMEPSVSSTSDVKLEKPKKYNPG) are disordered. Residues 92 to 126 (INKVCRDTLRDWCQQLGLSTNGKKIEVYLRLHRHA) enclose the SAP domain.

Interacts with DPPA4. In terms of tissue distribution, expressed in embryonic stem cells. No expression is seen in 5 months embryo, mesenchymal stem cells, embryonic fibrocytes and adult tissues.

Its subcellular location is the nucleus. Functionally, binds to target gene promoters, including NKX2-5 and SYCE1, but not GATA4, and may be involved in the maintenance of the active epigenetic status of these genes. In Homo sapiens (Human), this protein is Developmental pluripotency-associated protein 2 (DPPA2).